Reading from the N-terminus, the 118-residue chain is Large ribosomal subunit protein bL17 (118 aa).

Belongs to the bacterial ribosomal protein bL17 family. In terms of assembly, part of the 50S ribosomal subunit. Contacts protein L32.

The chain is Large ribosomal subunit protein bL17 from Thermus thermophilus (strain ATCC BAA-163 / DSM 7039 / HB27).